We begin with the raw amino-acid sequence, 577 residues long: MSEKYVFSEKHPGPLVVEGKLTDAERMKTESNFLRGTIAEDLNDGLTGGFKGDNFLLIRFHGMYQQDDRDIRAERAEQKLEPRHAMLLRCRLPGGVMTPQQWLRIDKFAGENTIYGSIRITNRQTFQYHGILKSNVKPVHQMLNSIGLDALATANDMNRNVLCTSNPIESELHQQAYEWAKTISEHLLPRTRAYAEIWMDQEKVATTDEEPILGSTYLPRKFKTTVVVPPQNDVDLHANDLNFVAIADNGRLVGFNVLVGGGLSIAHGDKETYPRTASELGYISIEHTLAIAEAVVTTQRDWGNRTNRKNAKTKYTLERVGVDNFKQEVEARAGVKFEAVRPYEFTERGDRIGWVKGIDNKWHLTLFIENGRILDYPGRPLKTGLAEIAKIHKGDFRLTANQNLIVAGVPARSKAKIDALAREHGLIDDSVSEQRKNSMACVSFPTCPLAMAEAERFLPEFVTKVEGIMQQHGVGDEHIVLRVTGCPNGCGRSMLAEIGLVGKAMGRYNLHLGGNREGTRIPRMYRENINETEILAEIDRLVGLWAQDRLQNEGFGDFVIRTNIIRPVLDPARDFYD.

Residues Cys-441, Cys-447, Cys-486, and Cys-490 each coordinate [4Fe-4S] cluster. Cys-490 contacts siroheme.

This sequence belongs to the nitrite and sulfite reductase 4Fe-4S domain family. As to quaternary structure, alpha(8)-beta(8). The alpha component is a flavoprotein, the beta component is a hemoprotein. The cofactor is siroheme. [4Fe-4S] cluster is required as a cofactor.

The enzyme catalyses hydrogen sulfide + 3 NADP(+) + 3 H2O = sulfite + 3 NADPH + 4 H(+). It participates in sulfur metabolism; hydrogen sulfide biosynthesis; hydrogen sulfide from sulfite (NADPH route): step 1/1. Its function is as follows. Component of the sulfite reductase complex that catalyzes the 6-electron reduction of sulfite to sulfide. This is one of several activities required for the biosynthesis of L-cysteine from sulfate. This is Sulfite reductase [NADPH] hemoprotein beta-component from Pectobacterium atrosepticum (strain SCRI 1043 / ATCC BAA-672) (Erwinia carotovora subsp. atroseptica).